We begin with the raw amino-acid sequence, 649 residues long: MPLGQRAGDKSESRYCGVEVLDFPAGEELPAVLSHSLSSSFDFLLAPLVDPDYRPTPGSVLPVAASDLVLGPAQWSSHIVGKISEWIDLDAEDEQLRLDSEITLKQEIAWASHLSLQACVLPPPKRSSCANYARVVNHILQGLTNLQLWLRIPLEKSEPMDEDHDGAKDNSDMSDTVDSWEWWNSFRLLCEHSSQLCVALDVLSTLPSMNSLGRWFGEPVRAAILQTNAFLTNARGYPCLSKRHQKLLTGFFNHSVQVIISGRSNHNVSQGGVLSGDENHTEDTAVRHALSPYLDYIAYIYQRMDPLPEQERFEINYRDFLQSPLQPLMDNLEAQTYETFEKDTVKYTQYQRAIAKALVDRVSDDDVSTTKTVLMVVGAGRGPLVRASLQAAEETGRKLKVYAVEKNPNAVITLHSLIKLEGWESLVTIISSDMRCWEAPEKADILVSELLGSFGDNELSPECLDGAQRFLKPDGISIPSSYTSFIEPITASKLHNDIKAHKDIAHFETAYVVKLHRIARLAPTQSVFTFDHPNPSPNASNQRYTKLKFEIPQETGSCLVHGFAGYFDAVLYKDVHLGIEPNTATPNMFSWFPIFFPLRKPIYVPSKTPIEVHFWRCCGATKVWYEWAVTAPSPSPIHNSNGRSYWVGL.

A TIM barrel region spans residues 10–300; it reads KSESRYCGVE…SPYLDYIAYI (291 aa). One can recognise an SAM-dependent MTase PRMT-type domain in the interval 321 to 627; sequence LQSPLQPLMD…CGATKVWYEW (307 aa). Residue Tyr-337 participates in S-adenosyl-L-methionine binding. Phe-340 lines the a protein pocket. Residues 346-347, Glu-405, and 433-434 each bind S-adenosyl-L-methionine; these read KY and DM. Positions 449 and 458 each coordinate a protein. Catalysis depends on proton donor/acceptor residues Glu-449 and Glu-458. The beta barrel stretch occupies residues 479-649; that stretch reads PSSYTSFIEP…SNGRSYWVGL (171 aa). The interval 491-507 is dimerization; the sequence is ASKLHNDIKAHKDIAHF.

Belongs to the class I-like SAM-binding methyltransferase superfamily. Protein arginine N-methyltransferase family.

Its subcellular location is the cytoplasm. It carries out the reaction L-arginyl-[protein] + 2 S-adenosyl-L-methionine = N(omega),N(omega)'-dimethyl-L-arginyl-[protein] + 2 S-adenosyl-L-homocysteine + 2 H(+). Functionally, methylates arginine residues in proteins such as histone H4. This Oryza sativa subsp. japonica (Rice) protein is Protein arginine N-methyltransferase 5 (PRMT5).